Reading from the N-terminus, the 72-residue chain is KFIRHKDESFYECGQSIGYQQYCVDACQAHGSKEKGYCKAMAPFGLPGGCYCPKLPSNRVKMCFGALESKCA.

The region spanning Lys-1–Ala-72 is the LCN-type CS-alpha/beta domain. Disulfide bonds link Cys-13-Cys-38, Cys-23-Cys-50, Cys-27-Cys-52, and Cys-63-Cys-71.

The protein belongs to the long (4 C-C) scorpion toxin superfamily. Sodium channel inhibitor family. As to expression, expressed by the venom gland.

The protein localises to the secreted. Its function is as follows. Sodium channel (Nav) specific neurotoxin. This chain is Phaiodotoxin-3, found in Anuroctonus phaiodactylus (Mafia scorpion).